The sequence spans 430 residues: 3-phosphoshikimate 1-carboxyvinyltransferase (430 aa).

3-phosphoshikimate contacts are provided by Lys21, Ser22, and Arg26. Lys21 lines the phosphoenolpyruvate pocket. Phosphoenolpyruvate-binding residues include Gly94 and Arg122. Ser168, Gln170, Asp315, and Lys342 together coordinate 3-phosphoshikimate. Residue Gln170 participates in phosphoenolpyruvate binding. The active-site Proton acceptor is Asp315. Residues Arg346 and Arg389 each coordinate phosphoenolpyruvate.

It belongs to the EPSP synthase family. Monomer.

The protein resides in the cytoplasm. It catalyses the reaction 3-phosphoshikimate + phosphoenolpyruvate = 5-O-(1-carboxyvinyl)-3-phosphoshikimate + phosphate. Its pathway is metabolic intermediate biosynthesis; chorismate biosynthesis; chorismate from D-erythrose 4-phosphate and phosphoenolpyruvate: step 6/7. Functionally, catalyzes the transfer of the enolpyruvyl moiety of phosphoenolpyruvate (PEP) to the 5-hydroxyl of shikimate-3-phosphate (S3P) to produce enolpyruvyl shikimate-3-phosphate and inorganic phosphate. The polypeptide is 3-phosphoshikimate 1-carboxyvinyltransferase (Salinibacter ruber (strain DSM 13855 / M31)).